A 174-amino-acid chain; its full sequence is Putative NADH dehydrogenase/NAD(P)H nitroreductase AF_2267 (174 aa).

Residue 107–112 (AARCLG) coordinates NAD(+).

This sequence belongs to the nitroreductase family. It depends on FMN as a cofactor.

In Archaeoglobus fulgidus (strain ATCC 49558 / DSM 4304 / JCM 9628 / NBRC 100126 / VC-16), this protein is Putative NADH dehydrogenase/NAD(P)H nitroreductase AF_2267.